We begin with the raw amino-acid sequence, 732 residues long: Catalase-peroxidase (732 aa).

Positions 96–219 form a cross-link, tryptophyl-tyrosyl-methioninium (Trp-Tyr) (with M-245); it reads WHSAGTYRIG…LGAVQMGLIY (124 aa). The active-site Proton acceptor is His97. Positions 219-245 form a cross-link, tryptophyl-tyrosyl-methioninium (Tyr-Met) (with W-96); that stretch reads YVNPEGPNGHPDPVASGRDIRETFGRM. His260 contacts heme b.

It belongs to the peroxidase family. Peroxidase/catalase subfamily. In terms of assembly, homodimer or homotetramer. Heme b is required as a cofactor. Post-translationally, formation of the three residue Trp-Tyr-Met cross-link is important for the catalase, but not the peroxidase activity of the enzyme.

The catalysed reaction is H2O2 + AH2 = A + 2 H2O. It carries out the reaction 2 H2O2 = O2 + 2 H2O. Bifunctional enzyme with both catalase and broad-spectrum peroxidase activity. The polypeptide is Catalase-peroxidase (Acaryochloris marina (strain MBIC 11017)).